We begin with the raw amino-acid sequence, 343 residues long: uncharacterized protein (343 aa).

Residues 66 to 89 (TQNPEPTSASTPPSASASSLPNGA) are disordered. The segment covering 71–84 (PTSASTPPSASASS) has biased composition (low complexity). Residues 96–116 (GVIAGPIVGVLGGLIVLVIIF) form a helical membrane-spanning segment. Disordered stretches follow at residues 161-191 (GGYQ…NDTR) and 252-343 (GRPL…SEHF). A compositionally biased stretch (polar residues) spans 165–188 (MHSTPWASSPRNSTIPQRSQSFYN). Positions 280-289 (SNDDSDETKL) are enriched in basic and acidic residues. Positions 290-299 (KQSSTESSSE) are enriched in low complexity. Basic and acidic residues-rich tracts occupy residues 301–311 (LDEKDKFDKNS) and 322–333 (SSYEHEISEEHK). Residues 334–343 (KHSKKRSEHF) show a composition bias toward basic residues.

Its subcellular location is the golgi apparatus membrane. This is an uncharacterized protein from Schizosaccharomyces pombe (strain 972 / ATCC 24843) (Fission yeast).